The primary structure comprises 31 residues: Toxin BmKK16 (31 aa).

Residue Gln1 is modified to Pyrrolidone carboxylic acid. 3 disulfides stabilise this stretch: Cys4-Cys20, Cys10-Cys25, and Cys14-Cys27. Pro31 is subject to Proline amide.

It belongs to the short scorpion toxin superfamily. Potassium channel inhibitor family. Alpha-KTx 17 subfamily. The N-terminus is blocked. Expressed by the venom gland.

It is found in the secreted. Functionally, blocker of potassium channels (Kv). This Olivierus martensii (Manchurian scorpion) protein is Toxin BmKK16.